A 406-amino-acid chain; its full sequence is Serine/threonine transporter SstT (406 aa).

9 consecutive transmembrane segments (helical) span residues 15–35 (LVLQILVGIILGISLALVSPS), 47–67 (FVGALKAIAPILVFILVAASI), 81–101 (IIAMYLAGTFFAALTAVVLSF), 140–160 (ALMSANYIGILAWGVGLGLAL), 191–211 (FGIFGLVASTFATTGFDALAG), 215–235 (LLVVLLSAMAIIALIVNPAMV), 289–309 (IPLGATINMAGAAITITTLTL), 315–335 (MGIEVDLMTAILLSVVAAVSA), and 362–382 (IAMQVVAVGFIIGVIQDSAET).

Belongs to the dicarboxylate/amino acid:cation symporter (DAACS) (TC 2.A.23) family.

Its subcellular location is the cell inner membrane. The enzyme catalyses L-serine(in) + Na(+)(in) = L-serine(out) + Na(+)(out). The catalysed reaction is L-threonine(in) + Na(+)(in) = L-threonine(out) + Na(+)(out). In terms of biological role, involved in the import of serine and threonine into the cell, with the concomitant import of sodium (symport system). The chain is Serine/threonine transporter SstT from Vibrio vulnificus (strain CMCP6).